The primary structure comprises 79 residues: MENLNMDLLYMAAAVMMGLAAIGAAIGIGILGGKFLEGAARQPDLIPLLRTQFFIVMGLVDAIPMIAVGLGLYVMFAVA.

2 consecutive transmembrane segments (helical) span residues 11-31 (MAAA…IGIL) and 53-73 (FFIV…LGLY).

Belongs to the ATPase C chain family. F-type ATPases have 2 components, F(1) - the catalytic core - and F(0) - the membrane proton channel. F(1) has five subunits: alpha(3), beta(3), gamma(1), delta(1), epsilon(1). F(0) has three main subunits: a(1), b(2) and c(10-14). The alpha and beta chains form an alternating ring which encloses part of the gamma chain. F(1) is attached to F(0) by a central stalk formed by the gamma and epsilon chains, while a peripheral stalk is formed by the delta and b chains.

The protein resides in the cell inner membrane. Functionally, f(1)F(0) ATP synthase produces ATP from ADP in the presence of a proton or sodium gradient. F-type ATPases consist of two structural domains, F(1) containing the extramembraneous catalytic core and F(0) containing the membrane proton channel, linked together by a central stalk and a peripheral stalk. During catalysis, ATP synthesis in the catalytic domain of F(1) is coupled via a rotary mechanism of the central stalk subunits to proton translocation. Its function is as follows. Key component of the F(0) channel; it plays a direct role in translocation across the membrane. A homomeric c-ring of between 10-14 subunits forms the central stalk rotor element with the F(1) delta and epsilon subunits. The protein is ATP synthase subunit c of Citrobacter koseri (strain ATCC BAA-895 / CDC 4225-83 / SGSC4696).